We begin with the raw amino-acid sequence, 353 residues long: CCN family member 3 (353 aa).

The signal sequence occupies residues 1 to 26 (MEPGGGHSLPVLLLLLLLLLLRPSEV). Residues 29-103 (REAPCPRPCG…GGGTGICMVL (75 aa)) enclose the IGFBP N-terminal domain. 6 disulfides stabilise this stretch: Cys33-Cys59, Cys37-Cys61, Cys41-Cys62, Cys48-Cys65, Cys73-Cys87, and Cys79-Cys100. The region spanning 106-172 (DNCVFDGMIY…GECCEKWVCE (67 aa)) is the VWFC domain. In terms of domain architecture, TSP type-1 spans 203–248 (NCIEQTTEWSACSRSCGMGFSTRVTNRNQQCEMVKQTRLCMMRPCE). 5 disulfide bridges follow: Cys260-Cys297, Cys277-Cys311, Cys288-Cys327, Cys291-Cys329, and Cys296-Cys333. A CTCK domain is found at 260 to 334 (CIRTKKSMKA…NTCVCHGNCP (75 aa)). N-linked (GlcNAc...) asparagine glycosylation is present at Asn276.

Belongs to the CCN family.

The protein resides in the secreted. Its subcellular location is the cytoplasm. It localises to the cell junction. It is found in the gap junction. In terms of biological role, immediate-early protein likely to play a role in cell growth regulation. The protein is CCN family member 3 (CCN3) of Coturnix japonica (Japanese quail).